The sequence spans 540 residues: Membrane protein insertase YidC (540 aa).

Residues 6-26 (NILLIALALVSFLLFQQWQVA) traverse the membrane as a helical segment. A disordered region spans residues 36 to 63 (QAQSSSTLPAPSFADELDPVPGQQQASA). Helical transmembrane passes span 342–362 (AFIQ…TFIV), 417–437 (LGGC…YWAL), 455–475 (LSAQ…MFLI), and 496–516 (PVMF…YWLV).

The protein belongs to the OXA1/ALB3/YidC family. Type 1 subfamily. Interacts with the Sec translocase complex via SecD. Specifically interacts with transmembrane segments of nascent integral membrane proteins during membrane integration.

The protein resides in the cell inner membrane. Required for the insertion and/or proper folding and/or complex formation of integral membrane proteins into the membrane. Involved in integration of membrane proteins that insert both dependently and independently of the Sec translocase complex, as well as at least some lipoproteins. Aids folding of multispanning membrane proteins. This chain is Membrane protein insertase YidC, found in Vibrio campbellii (strain ATCC BAA-1116).